The sequence spans 371 residues: Sporulation-specific protein 2 (371 aa).

Its subcellular location is the spore wall. In terms of biological role, essential for sporulation and seems to have a role at the time of, or after, initiation of nuclear division. Appears to have a role in outer spore wall formation. The chain is Sporulation-specific protein 2 (SSP2) from Saccharomyces cerevisiae (strain ATCC 204508 / S288c) (Baker's yeast).